Consider the following 456-residue polypeptide: Bis(5'-adenosyl)-triphosphatase enpp4 (456 aa).

The N-terminal stretch at 1–18 (MFNMKILVIPLFWGLVTG) is a signal peptide. Residues 19–410 (YKGNSSDSSA…DQWCINLPEA (392 aa)) lie on the Extracellular side of the membrane. Zn(2+) contacts are provided by Asp-37 and Thr-73. Thr-73 serves as the catalytic AMP-threonine intermediate. Residue Asn-94 coordinates substrate. Residue Asn-148 is glycosylated (N-linked (GlcNAc...) asparagine). Tyr-157 is a binding site for substrate. Asn-169 carries an N-linked (GlcNAc...) asparagine glycan. Zn(2+)-binding residues include Asp-192, His-196, Asp-240, and His-241. Residue Asp-192 coordinates substrate. The cysteines at positions 257 and 290 are disulfide-linked. Asn-279 and Asn-330 each carry an N-linked (GlcNAc...) asparagine glycan. Zn(2+) is bound at residue His-339. An N-linked (GlcNAc...) asparagine glycan is attached at Asn-389. Cysteines 397 and 404 form a disulfide. A helical transmembrane segment spans residues 411 to 431 (IGIVVSALLVLTMLTGLMIFM). The Cytoplasmic portion of the chain corresponds to 432–456 (RSRASTSRPFSRLQLQEDDDDPLID).

The protein belongs to the nucleotide pyrophosphatase/phosphodiesterase family. The cofactor is Zn(2+).

Its subcellular location is the cell membrane. The catalysed reaction is P(1),P(3)-bis(5'-adenosyl) triphosphate + H2O = AMP + ADP + 2 H(+). Hydrolyzes extracellular Ap3A into AMP and ADP, and Ap4A into AMP and ATP. Ap3A and Ap4A are diadenosine polyphosphates thought to induce proliferation of vascular smooth muscle cells. Acts as a procoagulant, mediating platelet aggregation at the site of nascent thrombus via release of ADP from Ap3A and activation of ADP receptors. This is Bis(5'-adenosyl)-triphosphatase enpp4 (Enpp4) from Mus musculus (Mouse).